Consider the following 372-residue polypeptide: Queuine tRNA-ribosyltransferase (372 aa).

Residue Asp-89 is the Proton acceptor of the active site. Substrate-binding positions include 89 to 93 (DSGGF), Asp-161, and Gly-232. The segment at 262-268 (GIGDLPS) is RNA binding. The active-site Nucleophile is the Asp-281. An RNA binding; important for wobble base 34 recognition region spans residues 286 to 290 (TKAAR). Positions 319, 321, 324, and 351 each coordinate Zn(2+).

The protein belongs to the queuine tRNA-ribosyltransferase family. In terms of assembly, homodimer. Within each dimer, one monomer is responsible for RNA recognition and catalysis, while the other monomer binds to the replacement base PreQ1. Zn(2+) is required as a cofactor.

It carries out the reaction 7-aminomethyl-7-carbaguanine + guanosine(34) in tRNA = 7-aminomethyl-7-carbaguanosine(34) in tRNA + guanine. It participates in tRNA modification; tRNA-queuosine biosynthesis. Catalyzes the base-exchange of a guanine (G) residue with the queuine precursor 7-aminomethyl-7-deazaguanine (PreQ1) at position 34 (anticodon wobble position) in tRNAs with GU(N) anticodons (tRNA-Asp, -Asn, -His and -Tyr). Catalysis occurs through a double-displacement mechanism. The nucleophile active site attacks the C1' of nucleotide 34 to detach the guanine base from the RNA, forming a covalent enzyme-RNA intermediate. The proton acceptor active site deprotonates the incoming PreQ1, allowing a nucleophilic attack on the C1' of the ribose to form the product. After dissociation, two additional enzymatic reactions on the tRNA convert PreQ1 to queuine (Q), resulting in the hypermodified nucleoside queuosine (7-(((4,5-cis-dihydroxy-2-cyclopenten-1-yl)amino)methyl)-7-deazaguanosine). The sequence is that of Queuine tRNA-ribosyltransferase from Chlamydia pneumoniae (Chlamydophila pneumoniae).